Consider the following 334-residue polypeptide: Methylthioribose-1-phosphate isomerase (334 aa).

Substrate is bound by residues 44–46 (RGA), Arg-87, and Gln-192. Residue Asp-233 is the Proton donor of the active site. A substrate-binding site is contributed by 243 to 244 (NK).

This sequence belongs to the eIF-2B alpha/beta/delta subunits family. MtnA subfamily.

The catalysed reaction is 5-(methylsulfanyl)-alpha-D-ribose 1-phosphate = 5-(methylsulfanyl)-D-ribulose 1-phosphate. Its pathway is amino-acid biosynthesis; L-methionine biosynthesis via salvage pathway; L-methionine from S-methyl-5-thio-alpha-D-ribose 1-phosphate: step 1/6. Functionally, catalyzes the interconversion of methylthioribose-1-phosphate (MTR-1-P) into methylthioribulose-1-phosphate (MTRu-1-P). The sequence is that of Methylthioribose-1-phosphate isomerase from Dehalococcoides mccartyi (strain ATCC BAA-2266 / KCTC 15142 / 195) (Dehalococcoides ethenogenes (strain 195)).